We begin with the raw amino-acid sequence, 196 residues long: SAGA-associated factor 11 homolog (196 aa).

Residues 1 to 22 form a disordered region; it reads MSAANMPTTTGAQGSGNQVPTT. An SGF11-type zinc finger spans residues 106–127; it reads CTCPNCDRLVAAARFAPHLEKC. Positions 141–196 are disordered; the sequence is RLATKEGATSAHLHSSGNTGGTDDEDDVDWSSDKRRKKSNQNSRNNGSKKNNGKTF. S172 is modified (phosphoserine). Low complexity predominate over residues 180 to 196; the sequence is NQNSRNNGSKKNNGKTF.

Belongs to the SGF11 family. Component of some SAGA transcription coactivator-HAT complexes, at least composed of Ada2b, not/nonstop, Pcaf/Gcn5, Sgf11 and Spt3. Within the SAGA complex, Sgf11, e(y)2, and not/nonstop form an additional subcomplex of SAGA called the DUB module (deubiquitination module). Interacts directly with not/nonstop. Interacts with the AMEX complex component xmas-2. Interacts with Cbp80; important for promoter recruitment of Sgf11 that is not associated with the DUB module.

It is found in the nucleus. The protein localises to the nucleoplasm. Its subcellular location is the cytoplasm. Its function is as follows. Component of the transcription regulatory histone acetylation (HAT) complex SAGA, a multiprotein complex that activates transcription by remodeling chromatin and mediating histone acetylation and deubiquitination. Within the SAGA complex, participates in a subcomplex that specifically deubiquitinates histone H2B. The SAGA complex is recruited to specific gene promoters by activators, where it is required for transcription. Required for nuclear receptor-mediated transactivation. Binds independently on SAGA to promoters in an RNA-dependent manner. Binds to mRNA and is essential for total mRNA export from the nucleus. Required to counteract heterochromatin silencing. Controls the development of neuronal connectivity in visual system by being required for accurate axon targeting in the optic lobe. Required for expression of ecdysone-induced genes such as br/broad. The polypeptide is SAGA-associated factor 11 homolog (Drosophila simulans (Fruit fly)).